A 142-amino-acid polypeptide reads, in one-letter code: Nucleoside diphosphate kinase (142 aa).

ATP contacts are provided by Lys-11, Phe-59, Arg-87, Thr-93, Arg-104, and Asn-114. The active-site Pros-phosphohistidine intermediate is the His-117.

It belongs to the NDK family. In terms of assembly, homotetramer. It depends on Mg(2+) as a cofactor.

It is found in the cytoplasm. The enzyme catalyses a 2'-deoxyribonucleoside 5'-diphosphate + ATP = a 2'-deoxyribonucleoside 5'-triphosphate + ADP. It catalyses the reaction a ribonucleoside 5'-diphosphate + ATP = a ribonucleoside 5'-triphosphate + ADP. Major role in the synthesis of nucleoside triphosphates other than ATP. The ATP gamma phosphate is transferred to the NDP beta phosphate via a ping-pong mechanism, using a phosphorylated active-site intermediate. In Thiobacillus denitrificans (strain ATCC 25259 / T1), this protein is Nucleoside diphosphate kinase.